Consider the following 305-residue polypeptide: UDP-3-O-acyl-N-acetylglucosamine deacetylase (305 aa).

Zn(2+) contacts are provided by H79, H238, and D242. H265 (proton donor) is an active-site residue.

The protein belongs to the LpxC family. Zn(2+) is required as a cofactor.

It catalyses the reaction a UDP-3-O-[(3R)-3-hydroxyacyl]-N-acetyl-alpha-D-glucosamine + H2O = a UDP-3-O-[(3R)-3-hydroxyacyl]-alpha-D-glucosamine + acetate. The protein operates within glycolipid biosynthesis; lipid IV(A) biosynthesis; lipid IV(A) from (3R)-3-hydroxytetradecanoyl-[acyl-carrier-protein] and UDP-N-acetyl-alpha-D-glucosamine: step 2/6. Its function is as follows. Catalyzes the hydrolysis of UDP-3-O-myristoyl-N-acetylglucosamine to form UDP-3-O-myristoylglucosamine and acetate, the committed step in lipid A biosynthesis. The protein is UDP-3-O-acyl-N-acetylglucosamine deacetylase of Salmonella typhi.